The chain runs to 393 residues: Protein TsgA (393 aa).

12 consecutive transmembrane segments (helical) span residues W11–M31, F51–P71, F78–L98, A101–I121, L134–F154, W162–G182, I206–I226, A245–L265, I273–Q293, W298–G318, F332–V352, and L361–V381.

It belongs to the major facilitator superfamily. TsgA family.

The protein localises to the cell inner membrane. This Salmonella dublin (strain CT_02021853) protein is Protein TsgA.